The following is a 163-amino-acid chain: Nuclear cap-binding protein subunit 2 (163 aa).

MRNA-binding positions include Tyr-18, Tyr-41, 110–114, 121–125, and 131–132; these read RVDWD, RQYGR, and QV. The RRM domain maps to 38 to 116; that stretch reads STLYVGNLSF…RIVRVDWDAG (79 aa).

The protein belongs to the RRM NCBP2 family. Component of the nuclear cap-binding complex (CBC), a heterodimer composed of Cbp80 and Cbp20 that interacts with m7GpppG-capped RNA.

It is found in the nucleus. Its function is as follows. Component of the cap-binding complex (CBC), which binds co-transcriptionally to the 5' cap of pre-mRNAs and is involved in various processes such as pre-mRNA splicing and RNA-mediated gene silencing (RNAi). The CBC complex is involved in miRNA-mediated RNA interference and is required for primary microRNAs (miRNAs) processing. Also involved in innate immunity via the short interfering RNAs (siRNAs) processing machinery by restricting the viral RNA production. In the CBC complex, Cbp20 recognizes and binds capped RNAs (m7GpppG-capped RNA) but requires Cbp80 to stabilize the movement of its N-terminal loop and lock the CBC into a high affinity cap-binding state with the cap structure. The polypeptide is Nuclear cap-binding protein subunit 2 (Cbp20) (Anopheles gambiae (African malaria mosquito)).